We begin with the raw amino-acid sequence, 589 residues long: Kelch-like protein 25 (589 aa).

In terms of domain architecture, BTB spans 46 to 114 (TDVTLWAGDR…AYSSRIVINE (69 aa)). Positions 149–250 (CLGMMVLSDA…LPSDCLKNAV (102 aa)) constitute a BACK domain. 6 Kelch repeats span residues 296–340 (TLLI…AIGC), 341–388 (KVYV…ELEN), 389–444 (CLYV…SAKL), 446–492 (LFVF…VLGS), 493–538 (QIFI…ASGN), and 539–585 (KLYV…STWK).

In terms of assembly, component of the BCR(KLHL25) E3 ubiquitin ligase complex, at least composed of CUL3, KLHL25 and RBX1.

It participates in protein modification; protein ubiquitination. Its function is as follows. Substrate-specific adapter of a BCR (BTB-CUL3-RBX1) E3 ubiquitin ligase complex involved in various processes, such as translation homeostasis and lipid synthesis. The BCR(KLHL25) ubiquitin ligase complex acts by mediating ubiquitination of hypophosphorylated EIF4EBP1 (4E-BP1): ubiquitination and subsequent degradation of hypophosphorylated EIF4EBP1 (4E-BP1) probably serves as a homeostatic mechanism to maintain translation and prevent eIF4E inhibition when eIF4E levels are low. The BCR(KLHL25) complex does not target EIF4EBP1 (4E-BP1) when it is hyperphosphorylated or associated with eIF4E. The BCR(KLHL25) complex also acts as a regulator of lipid synthesis by mediating ubiquitination and degradation of ACLY, thereby inhibiting lipid synthesis. BCR(KLHL25)-mediated degradation of ACLY promotes fatty acid oxidation and is required for differentiation of inducible regulatory T (iTreg) cells. The sequence is that of Kelch-like protein 25 from Mus musculus (Mouse).